Reading from the N-terminus, the 456-residue chain is Solute carrier family 38 member 6 (456 aa).

Methionine 1 carries the post-translational modification N-acetylmethionine. Phosphoserine occurs at positions 4 and 7. 5 helical membrane-spanning segments follow: residues 42 to 62 (SPGV…MGSG), 85 to 105 (VALL…QTAV), 111 to 131 (LGLF…IIIQ), 170 to 190 (LLII…KIGF), and 191 to 211 (LGYT…VVII). The cysteines at positions 218 and 238 are disulfide-linked. An N-linked (GlcNAc...) asparagine glycan is attached at asparagine 233. The helical transmembrane segment at 250–270 (AYALPTMAFSFLCHTSILPIY) threads the bilayer. Asparagine 283 carries an N-linked (GlcNAc...) asparagine glycan. 5 helical membrane passes run 288–308 (AIAL…LTFY), 327–347 (VVVM…VPLI), 371–391 (FLIT…VPDI), 394–414 (VFGV…PGLF), and 431–451 (AFVL…LIIF).

Belongs to the amino acid/polyamine transporter 2 family.

It is found in the cell membrane. Its subcellular location is the synapse. The catalysed reaction is L-glutamine(out) = L-glutamine(in). It catalyses the reaction L-glutamate(out) = L-glutamate(in). In terms of biological role, amino acid transporter with an apparent selectivity for L-glutamine and L-glutamate. May facilitate glutamine uptake in excitatory neurons. The transport mechanism remains to be elucidated. This Homo sapiens (Human) protein is Solute carrier family 38 member 6.